The chain runs to 170 residues: Large ribosomal subunit protein uL18m (170 aa).

Belongs to the universal ribosomal protein uL18 family. Component of the mitochondrial ribosome large subunit (39S) which comprises a 16S rRNA and about 50 distinct proteins.

The protein resides in the mitochondrion. The polypeptide is Large ribosomal subunit protein uL18m (mrpl-18) (Caenorhabditis elegans).